A 1492-amino-acid polypeptide reads, in one-letter code: MERLLAQLCGSSAAWPLPLWEGDTTGHCFTQLVLSALPHALLAVLSACYLGTPRSPDYILPCSPGWRLRLAASFLLSVFPLLDLLPVALPPGAGPGPIGLEVLAGCVAAVAWISHSLALWVLAHSPHGHSRGPLALALVALLPAPALVLTVLWHCQRGTLLPPLLPGPMARLCLLILQLAALLAYALGWAAPGGPREPWAQEPLLPEDQEPEVAEDGESWLSRFSYAWLAPLLARGACGELRQPQDICRLPHRLQPTYLARVFQAHWQEGARLWRALYGAFGRCYLALGLLKLVGTMLGFSGPLLLSLLVGFLEEGQEPLSHGLLYALGLAGGAVLGAVLQNQYGYEVYKVTLQARGAVLNILYCKALQLGPSRPPTGEALNLLGTDSERLLNFAGSFHEAWGLPLQLAITLYLLYQQVGVAFVGGLILALLLVPVNKVIATRIMASNQEMLQHKDARVKLVTELLSGIRVIKFCGWEQALGARVEACRARELGRLRVIKYLDAACVYLWAALPVVISIVIFITYVLMGHQLTATKVFTALALVRMLILPLNNFPWVINGLLEAKVSLDRIQLFLDLPNHNPQAYYSPDPPAEPSTVLELHGALFSWDPVGTSLETFISHLEVKKGMLVGIVGKVGCGKSSLLAAIAGELHRLRGHVAVRGLSKGFGLATQEPWIQFATIRDNILFGKTFDAQLYKEVLEACALNDDLSILPAGDQTEVGEKGVTLSGGQRARIALARAVYQEKELYLLDDPLAAVDADVANHLLHRCILGMLSYTTRLLCTHRTEYLERADAVLLMEAGRLIRAGPPSEILPLVQAVPKAWAENGQESDSATAQSVQNPEKTKEGLEEEQSTSGRLLQEESKKEGAVALHVYQAYWKAVGQGLALAILFSLLLMQATRNAADWWLSHWISQLKAENSSQEAQPSTSPASMGLFSPQLLLFSPGNLYIPVFPLPKAAPNGSSDIRFYLTVYATIAGVNSLCTLLRAVLFAAGTLQAAATLHRRLLHRVLMAPVTFFNATPTGRILNRFSSDVACADDSLPFILNILLANAAGLLGLLAVLGSGLPWLLLLLPPLSIMYYHVQRHYRASSRELRRLGSLTLSPLYSHLADTLAGLSVLRATGATYRFEEENLRLLELNQRCQFATSATMQWLDIRLQLMGAAVVSAIAGIALVQHQQGLANPGLVGLSLSYALSLTGLLSGLVSSFTQTEAMLVSVERLEEYTCDLPQEPQGQPLQLGTGWLTQGGVEFQDVVLAYRPGLPNALDGVTFCVQPGEKLGIVGRTGSGKSSLLLVLFRLLEPSSGRVLLDGVDTSQLELAQLRSQLAIIPQEPFLFSGTVRENLDPQGLHKDRALWQALKQCHLSEVITSMGGLDGELGEGGRSLSLGQRQLLCLARALLTDAKILCIDEATASVDQKTDQLLQQTICKRFANKTVLTIAHRLNTILNSDRVLVLQAGRVVELDSPATLRNQPHSLFQQLLQSSQQGVPASLGGP.

9 helical membrane passes run 32–52 (LVLS…YLGT), 70–90 (LAAS…VALP), 102–122 (VLAG…LWVL), 133–153 (PLAL…TVLW), 172–192 (LCLL…WAAP), 293–313 (LVGT…VGFL), 320–340 (LSHG…GAVL), 391–411 (LLNF…LAIT), and 414–434 (LLYQ…LLLV). Residues 285–563 (YLALGLLKLV…FPWVINGLLE (279 aa)) enclose the ABC transmembrane type-1 1 domain. Phosphothreonine is present on threonine 463. Residue serine 467 is modified to Phosphoserine. 2 helical membrane-spanning segments follow: residues 507-527 (VYLW…TYVL) and 538-558 (FTAL…PWVI). The ABC transporter 1 domain occupies 598–824 (LELHGALFSW…VQAVPKAWAE (227 aa)). 633 to 640 (GKVGCGKS) serves as a coordination point for ATP. The tract at residues 825-860 (NGQESDSATAQSVQNPEKTKEGLEEEQSTSGRLLQE) is disordered. Positions 826-840 (GQESDSATAQSVQNP) are enriched in polar residues. A run of 6 helical transmembrane segments spans residues 875–895 (AYWK…LLLM), 933–953 (LFSP…VFPL), 974–994 (IAGV…AGTL), 1051–1071 (AGLL…LLLL), 1153–1173 (IRLQ…ALVQ), and 1182–1202 (GLVG…SGLV). Residues 885 to 1210 (ALAILFSLLL…LVSSFTQTEA (326 aa)) enclose the ABC transmembrane type-1 2 domain. The 234-residue stretch at 1246-1479 (VEFQDVVLAY…PHSLFQQLLQ (234 aa)) folds into the ABC transporter 2 domain. 1280-1287 (GRTGSGKS) is a binding site for ATP.

Belongs to the ABC transporter superfamily. ABCC family. Conjugate transporter (TC 3.A.1.208) subfamily. In testis, localized to peritubular myoid cells, Leydig cells, along the basal membrane of Sertoli cells, moderately in the adluminal compartment of the seminiferous tubules, and in vascular endothelial cells. In terms of tissue distribution, specifically expressed in spleen. As to expression, widely expressed.

The protein resides in the cell membrane. Its subcellular location is the basolateral cell membrane. It localises to the basal cell membrane. It catalyses the reaction ATP + H2O + xenobioticSide 1 = ADP + phosphate + xenobioticSide 2.. The enzyme catalyses an S-substituted glutathione(in) + ATP + H2O = an S-substituted glutathione(out) + ADP + phosphate + H(+). It carries out the reaction 17beta-estradiol 17-O-(beta-D-glucuronate)(in) + ATP + H2O = 17beta-estradiol 17-O-(beta-D-glucuronate)(out) + ADP + phosphate + H(+). The catalysed reaction is leukotriene C4(in) + ATP + H2O = leukotriene C4(out) + ADP + phosphate + H(+). Its function is as follows. ATP-dependent transporter of the ATP-binding cassette (ABC) family that actively extrudes physiological compounds, and xenobiotics from cells. Lipophilic anion transporter that mediates ATP-dependent transport of glucuronide conjugates such as estradiol-17-beta-o-glucuronide and GSH conjugates such as leukotriene C4 (LTC4). May contribute to regulate the transport of organic compounds in testes across the blood-testis-barrier. Mediates multidrug resistance (MDR) in cancer cells by preventing the intracellular accumulation of certain antitumor drugs, such as, docetaxel and paclitaxel. Does not transport glycocholic acid, taurocholic acid, MTX, folic acid, cAMP, or cGMP. This Homo sapiens (Human) protein is ATP-binding cassette sub-family C member 10 (ABCC10).